Here is a 277-residue protein sequence, read N- to C-terminus: Large ribosomal subunit protein uL2 (277 aa).

The tract at residues 199–277 is disordered; it reads DHMNTSIGKA…ILLSRHKRKK (79 aa). The segment covering 209-220 has biased composition (basic residues); it reads GRNRWLGRKPHN.

This sequence belongs to the universal ribosomal protein uL2 family. In terms of assembly, part of the 50S ribosomal subunit. Forms a bridge to the 30S subunit in the 70S ribosome.

Its function is as follows. One of the primary rRNA binding proteins. Required for association of the 30S and 50S subunits to form the 70S ribosome, for tRNA binding and peptide bond formation. It has been suggested to have peptidyltransferase activity; this is somewhat controversial. Makes several contacts with the 16S rRNA in the 70S ribosome. In Bradyrhizobium diazoefficiens (strain JCM 10833 / BCRC 13528 / IAM 13628 / NBRC 14792 / USDA 110), this protein is Large ribosomal subunit protein uL2.